The sequence spans 366 residues: Tetraacyldisaccharide 4'-kinase (366 aa).

ATP is bound at residue 51–58; the sequence is TVGGTGKT.

This sequence belongs to the LpxK family.

The enzyme catalyses a lipid A disaccharide + ATP = a lipid IVA + ADP + H(+). The protein operates within glycolipid biosynthesis; lipid IV(A) biosynthesis; lipid IV(A) from (3R)-3-hydroxytetradecanoyl-[acyl-carrier-protein] and UDP-N-acetyl-alpha-D-glucosamine: step 6/6. Functionally, transfers the gamma-phosphate of ATP to the 4'-position of a tetraacyldisaccharide 1-phosphate intermediate (termed DS-1-P) to form tetraacyldisaccharide 1,4'-bis-phosphate (lipid IVA). This chain is Tetraacyldisaccharide 4'-kinase, found in Phocaeicola vulgatus (strain ATCC 8482 / DSM 1447 / JCM 5826 / CCUG 4940 / NBRC 14291 / NCTC 11154) (Bacteroides vulgatus).